We begin with the raw amino-acid sequence, 105 residues long: uncharacterized protein (105 aa).

3 helical membrane-spanning segments follow: residues 3–23, 41–61, and 63–83; these read ISPL…QALF, DLVN…ALVS, and AFPV…TFIY.

The protein localises to the cell membrane. This is an uncharacterized protein from Methanocaldococcus jannaschii (strain ATCC 43067 / DSM 2661 / JAL-1 / JCM 10045 / NBRC 100440) (Methanococcus jannaschii).